Consider the following 71-residue polypeptide: Large ribosomal subunit protein uL29 (71 aa).

Residues Met1–Glu20 form a disordered region.

It belongs to the universal ribosomal protein uL29 family.

This chain is Large ribosomal subunit protein uL29, found in Clostridium kluyveri (strain ATCC 8527 / DSM 555 / NBRC 12016 / NCIMB 10680 / K1).